Consider the following 400-residue polypeptide: Argininosuccinate synthase (400 aa).

A8–S16 contacts ATP. Position 87 (Y87) interacts with L-citrulline. G117 serves as a coordination point for ATP. The L-aspartate site is built by T119, N123, and D124. N123 is a binding site for L-citrulline. L-citrulline contacts are provided by R127, S175, E260, and Y272.

This sequence belongs to the argininosuccinate synthase family. Type 1 subfamily. Homotetramer.

Its subcellular location is the cytoplasm. The enzyme catalyses L-citrulline + L-aspartate + ATP = 2-(N(omega)-L-arginino)succinate + AMP + diphosphate + H(+). The protein operates within amino-acid biosynthesis; L-arginine biosynthesis; L-arginine from L-ornithine and carbamoyl phosphate: step 2/3. This Mycobacterium sp. (strain KMS) protein is Argininosuccinate synthase.